A 793-amino-acid polypeptide reads, in one-letter code: MSYLRASRTSSNLSLAKKPSKTRKKLQARKEWDSSVNDLTVFRATNEELEHRREIHRSKNQWLARWELQNKANYKQSEKENSTQFENSRLALMKEILSDQYLMNDVLERSDRALAVVKDLFGDAPRRHTGFPNVTMAPSCDLETSRAPIVRKKDPPTQLSILSESVMDSQAINEVDKSLSRSEYSDSEAEVSISIQPNMKAERVQQLLTGEGPKSEAFITPHKSEGDPSQTQCALNATTAVNRVKVRRTEEESPKPEESDSIIGRVLNPHGKANKRISLKGKKKRTTNQSQTKDFSTFKASERDLTTSNQSSLGLLNSMIMEVEQDLAEYERQTGREVLSAPPAHGLTGFTLSLVSSLKRVVSYLKESDLLLQREVRERQNLQGELVEQRLMLDALTAEILSLKEGGNIHENHSQTKQCPEVDGDKLTSITQEAKTFPGLNGETCRTSADCGLSKVNQFMDSQDVQDTDEKHSRLGVSKDEFGARLYPQGRPAEEPRLASALPSHVFQQAVLLSPPRQKTVGNLSSHSAVPKRAANRLPSPPADLMTAPVEIEWPESKLFQRSINYKNTAALIERGTMVPGQENSKHVYSSAQGSERVNQHPTESTKEVQGLEIGESQINPLQNEDLVSQMQQLALQNAALKAQLEQIHFSPEGNAPEEAAAEQLHNPEPATDTPARAALVPVSLEMRIAELNRQSAEARNKLLKLIEQQKQSIVVSPTLSPITPQGRRTGSSLDTTPLSSCSTSGRRSSGASNKSESISTSVGSLRSASTGRRSQAANDRGEGWFALSAHIS.

The interval M1–R29 is disordered. A compositionally biased stretch (basic residues) spans K18–Q27. Positions S312–E405 form a coiled coil. Positions K519–P542 are disordered. A coiled-coil region spans residues L622–Q712. The span at P718–L739 shows a compositional bias: polar residues. Residues P718–E783 are disordered. Positions S740 to S753 are enriched in low complexity. Residues N754–A778 are compositionally biased toward polar residues.

It localises to the cytoplasm. The protein localises to the cytoskeleton. The protein resides in the microtubule organizing center. It is found in the centrosome. Its subcellular location is the centriole. It localises to the spindle. In terms of biological role, regulator required for centriole duplication. This chain is Spindle and centriole-associated protein 1 (spice1), found in Xenopus laevis (African clawed frog).